The following is a 116-amino-acid chain: MRHRRRTPHLNKPADQRKALMRALTTALLREGRITTTKARAKAIRATTEKMITLAKDGSLAARRQALAYIYDKELVRSLFEQAPERYRDRPGGYTRILRTVRRRGDGAEMAVIELV.

This sequence belongs to the bacterial ribosomal protein bL17 family. In terms of assembly, part of the 50S ribosomal subunit. Contacts protein L32.

This Synechococcus sp. (strain JA-3-3Ab) (Cyanobacteria bacterium Yellowstone A-Prime) protein is Large ribosomal subunit protein bL17.